The sequence spans 122 residues: Small ribosomal subunit protein uS13 (122 aa).

The tract at residues L96–K122 is disordered.

The protein belongs to the universal ribosomal protein uS13 family. In terms of assembly, part of the 30S ribosomal subunit. Forms a loose heterodimer with protein S19. Forms two bridges to the 50S subunit in the 70S ribosome.

Its function is as follows. Located at the top of the head of the 30S subunit, it contacts several helices of the 16S rRNA. In the 70S ribosome it contacts the 23S rRNA (bridge B1a) and protein L5 of the 50S subunit (bridge B1b), connecting the 2 subunits; these bridges are implicated in subunit movement. Contacts the tRNAs in the A and P-sites. This chain is Small ribosomal subunit protein uS13, found in Magnetococcus marinus (strain ATCC BAA-1437 / JCM 17883 / MC-1).